The chain runs to 581 residues: Oligo-1,6-glucosidase IMA5 (581 aa).

The active-site Nucleophile is D210. E272 (proton donor) is an active-site residue.

This sequence belongs to the glycosyl hydrolase 13 family.

The enzyme catalyses Hydrolysis of (1-&gt;6)-alpha-D-glucosidic linkages in some oligosaccharides produced from starch and glycogen by alpha-amylase, and in isomaltose.. Its function is as follows. Alpha-glucosidase with specificity for isomaltose, maltose, and palatinose. The protein is Oligo-1,6-glucosidase IMA5 (IMA5) of Saccharomyces cerevisiae (strain ATCC 204508 / S288c) (Baker's yeast).